Consider the following 249-residue polypeptide: Tetrahydromethanopterin S-methyltransferase subunit A (249 aa).

Topologically, residues 2–225 (PEKAEPAEGW…YMAGYLSGRT (224 aa)) are cytoplasmic. 5-hydroxybenzimidazolylcob(I)amide is bound at residue H88. A helical membrane pass occupies residues 226–246 (MGLLIGIISGMIFLFLPMVVL). Topologically, residues 247–249 (GGV) are extracellular.

Belongs to the MtrA family. The complex is composed of 8 subunits; MtrA, MtrB, MtrC, MtrD, MtrE, MtrF, MtrG and MtrH. The cofactor is 5-hydroxybenzimidazolylcob(I)amide.

It localises to the cell membrane. The enzyme catalyses 5-methyl-5,6,7,8-tetrahydromethanopterin + coenzyme M + 2 Na(+)(in) = 5,6,7,8-tetrahydromethanopterin + methyl-coenzyme M + 2 Na(+)(out). It functions in the pathway one-carbon metabolism; methanogenesis from CO(2); methyl-coenzyme M from 5,10-methylene-5,6,7,8-tetrahydromethanopterin: step 2/2. Its function is as follows. Part of a complex that catalyzes the formation of methyl-coenzyme M and tetrahydromethanopterin from coenzyme M and methyl-tetrahydromethanopterin. This is an energy-conserving, sodium-ion translocating step. In Methanopyrus kandleri (strain AV19 / DSM 6324 / JCM 9639 / NBRC 100938), this protein is Tetrahydromethanopterin S-methyltransferase subunit A.